The primary structure comprises 148 residues: Cytochrome c oxidase subunit 6, mitochondrial (148 aa).

The N-terminal 40 residues, 1-40 (MLSRAIFRNPVINRTLLRARPGAYHATRLTKNTFIQSRKY), are a transit peptide targeting the mitochondrion.

It belongs to the cytochrome c oxidase subunit 5A family. Component of the cytochrome c oxidase (complex IV, CIV), a multisubunit enzyme composed of 12 subunits. The complex is composed of a catalytic core of 3 subunits COX1, COX2 and COX3, encoded in the mitochondrial DNA, and 9 supernumerary subunits COX4, COX5A (or COX5B), COX6, COX7, COX8, COX9, COX12, COX13 and COX26, which are encoded in the nuclear genome. The complex exists as a monomer or a dimer and forms supercomplexes (SCs) in the inner mitochondrial membrane with a dimer of ubiquinol-cytochrome c oxidoreductase (cytochrome b-c1 complex, complex III, CIII), resulting in 2 different assemblies (supercomplexes III(2)IV and III(2)IV(2)). COX26 interacts with COX1, COX2, COX6 and COX9.

It localises to the mitochondrion inner membrane. Its pathway is energy metabolism; oxidative phosphorylation. In terms of biological role, component of the cytochrome c oxidase, the last enzyme in the mitochondrial electron transport chain which drives oxidative phosphorylation. The respiratory chain contains 3 multisubunit complexes succinate dehydrogenase (complex II, CII), ubiquinol-cytochrome c oxidoreductase (cytochrome b-c1 complex, complex III, CIII) and cytochrome c oxidase (complex IV, CIV), that cooperate to transfer electrons derived from NADH and succinate to molecular oxygen, creating an electrochemical gradient over the inner membrane that drives transmembrane transport and the ATP synthase. Cytochrome c oxidase is the component of the respiratory chain that catalyzes the reduction of oxygen to water. Electrons originating from reduced cytochrome c in the intermembrane space (IMS) are transferred via the dinuclear copper A center (CU(A)) of COX2 and heme A of COX1 to the active site in COX1, a binuclear center (BNC) formed by heme A3 and copper B (CU(B)). The BNC reduces molecular oxygen to 2 water molecules using 4 electrons from cytochrome c in the IMS and 4 protons from the mitochondrial matrix. COX6 may stabilize the region of CIV at the interface with CIII, supporting a role in formation or stability of the CIII(2)IV(2) SC. The protein is Cytochrome c oxidase subunit 6, mitochondrial (COX6) of Saccharomyces cerevisiae (strain ATCC 204508 / S288c) (Baker's yeast).